Reading from the N-terminus, the 351-residue chain is Phenylalanine--tRNA ligase alpha subunit (351 aa).

Residue E266 participates in Mg(2+) binding.

Belongs to the class-II aminoacyl-tRNA synthetase family. Phe-tRNA synthetase alpha subunit type 1 subfamily. Tetramer of two alpha and two beta subunits. Requires Mg(2+) as cofactor.

It localises to the cytoplasm. The enzyme catalyses tRNA(Phe) + L-phenylalanine + ATP = L-phenylalanyl-tRNA(Phe) + AMP + diphosphate + H(+). In Anaplasma marginale (strain St. Maries), this protein is Phenylalanine--tRNA ligase alpha subunit.